Reading from the N-terminus, the 372-residue chain is Queuine tRNA-ribosyltransferase (372 aa).

The active-site Proton acceptor is Asp92. Substrate is bound by residues 92 to 96, Asp146, Gln188, and Gly215; that span reads DSGGY. The interval 246-252 is RNA binding; sequence GIGSLRE. Residue Asp265 is the Nucleophile of the active site. The interval 270–274 is RNA binding; important for wobble base 34 recognition; that stretch reads TRLGR. Zn(2+) is bound by residues Cys303, Cys305, Cys308, and His334.

It belongs to the queuine tRNA-ribosyltransferase family. Homodimer. Within each dimer, one monomer is responsible for RNA recognition and catalysis, while the other monomer binds to the replacement base PreQ1. It depends on Zn(2+) as a cofactor.

The enzyme catalyses 7-aminomethyl-7-carbaguanine + guanosine(34) in tRNA = 7-aminomethyl-7-carbaguanosine(34) in tRNA + guanine. It participates in tRNA modification; tRNA-queuosine biosynthesis. Catalyzes the base-exchange of a guanine (G) residue with the queuine precursor 7-aminomethyl-7-deazaguanine (PreQ1) at position 34 (anticodon wobble position) in tRNAs with GU(N) anticodons (tRNA-Asp, -Asn, -His and -Tyr). Catalysis occurs through a double-displacement mechanism. The nucleophile active site attacks the C1' of nucleotide 34 to detach the guanine base from the RNA, forming a covalent enzyme-RNA intermediate. The proton acceptor active site deprotonates the incoming PreQ1, allowing a nucleophilic attack on the C1' of the ribose to form the product. After dissociation, two additional enzymatic reactions on the tRNA convert PreQ1 to queuine (Q), resulting in the hypermodified nucleoside queuosine (7-(((4,5-cis-dihydroxy-2-cyclopenten-1-yl)amino)methyl)-7-deazaguanosine). In Prochlorococcus marinus (strain MIT 9211), this protein is Queuine tRNA-ribosyltransferase.